A 92-amino-acid polypeptide reads, in one-letter code: UPF0223 protein SUB0967 (92 aa).

This sequence belongs to the UPF0223 family.

The chain is UPF0223 protein SUB0967 from Streptococcus uberis (strain ATCC BAA-854 / 0140J).